The sequence spans 98 residues: YcgL domain-containing protein CJA_2437 (98 aa).

Residues 3 to 87 (IIAEIYRSPK…RDLVDAEAKR (85 aa)) form the YcgL domain.

This Cellvibrio japonicus (strain Ueda107) (Pseudomonas fluorescens subsp. cellulosa) protein is YcgL domain-containing protein CJA_2437.